The primary structure comprises 92 residues: Small ribosomal subunit protein uS19 (92 aa).

The protein belongs to the universal ribosomal protein uS19 family.

Functionally, protein S19 forms a complex with S13 that binds strongly to the 16S ribosomal RNA. This is Small ribosomal subunit protein uS19 from Listeria innocua serovar 6a (strain ATCC BAA-680 / CLIP 11262).